The sequence spans 378 residues: MAVEMASQSQVLVEEKSSVRILTLNRPKQLNALSFHMISRLLQLFLAFEEDPSVKLVILKGHGRAFCAGGDVAAVVRDINQGNWRLGANYFSSEYMLNYVMATYSKAQVSILNGIVMGGGAGVSVHGRFRIATENTVFAMPETALGLFPDVGASYFLSRLPGFFGEYVGLTGARLDGAEMLACGLATHFVPSTRLTALEADLCRINSNDPTFASTILDAYTQHPRLKQQSAYRRLDVIDRCFSRRTVEEIISALEREATQEADGWISATIQALKKGSPASLKISLRSIREGRLQGVGQCLIREYRMVCHVMKGEISKDFVEGCRAILVDKDKNPKWEPRRLEDMKDSMVEQYFERVEREDDLKLPPRNNLPALGIAKL.

A2 carries the N-acetylalanine modification. E94, G119, E142, and D150 together coordinate substrate.

Belongs to the enoyl-CoA hydratase/isomerase family. Expressed in roots, leaves, flowers and siliques.

It is found in the peroxisome. It catalyses the reaction 3-hydroxy-2-methylpropanoyl-CoA + H2O = 3-hydroxy-2-methylpropanoate + CoA + H(+). It participates in amino-acid degradation; L-valine degradation. With respect to regulation, inhibited by copper. Involved in valine catabolism. May be indirectly involved in benzoic acid biosynthesis and in cold signaling and cold tolerance. The sequence is that of 3-hydroxyisobutyryl-CoA hydrolase 1 (CHY1) from Arabidopsis thaliana (Mouse-ear cress).